Here is a 79-residue protein sequence, read N- to C-terminus: Cytochrome b (79 aa).

A run of 3 helical transmembrane segments spans residues 1–7 (SALFLAM), 31–52 (WLIR…YLHI), and 67–79 (WNIG…LTMA). 2 residues coordinate heme b: His37 and His51.

This sequence belongs to the cytochrome b family. As to quaternary structure, the cytochrome bc1 complex contains 11 subunits: 3 respiratory subunits (MT-CYB, CYC1 and UQCRFS1), 2 core proteins (UQCRC1 and UQCRC2) and 6 low-molecular weight proteins (UQCRH/QCR6, UQCRB/QCR7, UQCRQ/QCR8, UQCR10/QCR9, UQCR11/QCR10 and a cleavage product of UQCRFS1). This cytochrome bc1 complex then forms a dimer. Requires heme b as cofactor.

It localises to the mitochondrion inner membrane. Component of the ubiquinol-cytochrome c reductase complex (complex III or cytochrome b-c1 complex) that is part of the mitochondrial respiratory chain. The b-c1 complex mediates electron transfer from ubiquinol to cytochrome c. Contributes to the generation of a proton gradient across the mitochondrial membrane that is then used for ATP synthesis. This is Cytochrome b (MT-CYB) from Dipodomys heermanni (Heermann's kangaroo rat).